Reading from the N-terminus, the 217-residue chain is MNLVLMGLPGAGKGTQAERIVDDYGIPHISTGDMFRAAMKEETQLGLEAKSFIDKGELVPDEVTIGIVRERLGKNDCEQGFLLDGFPRTVAQAEALEDILKDLGRTIDYVINIKVDKDALMERLTGRRICKNCGATYHLVFNPPAKENVCDKCGGELYQRADDNAETVSTRLEVNLKQTEPLLNFYSEKGYLANIDGAKHINDVYADIKDLLGGLNK.

10–15 (GAGKGT) provides a ligand contact to ATP. The tract at residues 30–59 (STGDMFRAAMKEETQLGLEAKSFIDKGELV) is NMP. AMP is bound by residues T31, R36, 57–59 (ELV), 85–88 (GFPR), and Q92. The tract at residues 126–163 (GRRICKNCGATYHLVFNPPAKENVCDKCGGELYQRADD) is LID. R127 lines the ATP pocket. Zn(2+) contacts are provided by C130 and C133. 136 to 137 (TY) lines the ATP pocket. Residues C150 and C153 each coordinate Zn(2+). 2 residues coordinate AMP: R160 and R171. K199 contacts ATP.

The protein belongs to the adenylate kinase family. Monomer.

The protein resides in the cytoplasm. The enzyme catalyses AMP + ATP = 2 ADP. It participates in purine metabolism; AMP biosynthesis via salvage pathway; AMP from ADP: step 1/1. Functionally, catalyzes the reversible transfer of the terminal phosphate group between ATP and AMP. Plays an important role in cellular energy homeostasis and in adenine nucleotide metabolism. The sequence is that of Adenylate kinase from Bacillus pumilus (strain SAFR-032).